Consider the following 357-residue polypeptide: Protein-glutamate methylesterase/protein-glutamine glutaminase (357 aa).

Residues 3–120 (RVLVVDDSAF…SIDLYKVRDM (118 aa)) form the Response regulatory domain. Aspartate 54 is modified (4-aspartylphosphate). A CheB-type methylesterase domain is found at 161-355 (FRAGKQLICI…AAIMTYMKKE (195 aa)). Active-site residues include serine 173, histidine 200, and aspartate 296.

Belongs to the CheB family. In terms of processing, phosphorylated by CheA. Phosphorylation of the N-terminal regulatory domain activates the methylesterase activity.

The protein resides in the cytoplasm. It carries out the reaction [protein]-L-glutamate 5-O-methyl ester + H2O = L-glutamyl-[protein] + methanol + H(+). The enzyme catalyses L-glutaminyl-[protein] + H2O = L-glutamyl-[protein] + NH4(+). Its function is as follows. Involved in chemotaxis. Part of a chemotaxis signal transduction system that modulates chemotaxis in response to various stimuli. Catalyzes the demethylation of specific methylglutamate residues introduced into the chemoreceptors (methyl-accepting chemotaxis proteins or MCP) by CheR. Also mediates the irreversible deamidation of specific glutamine residues to glutamic acid. The polypeptide is Protein-glutamate methylesterase/protein-glutamine glutaminase (Bacillus licheniformis (strain ATCC 14580 / DSM 13 / JCM 2505 / CCUG 7422 / NBRC 12200 / NCIMB 9375 / NCTC 10341 / NRRL NRS-1264 / Gibson 46)).